A 507-amino-acid polypeptide reads, in one-letter code: Blue light receptor lreB (507 aa).

The PAS domain occupies arginine 170–threonine 234. The segment at cysteine 463–cysteine 488 adopts a GATA-type zinc-finger fold.

Functionally, probable transcription factor involved in light regulation. Plays crucial roles in fungal growth and asexual development. Involved in conidiophore formation, sclerotium production, and conidial stress tolerance. Positively regulates the fungal pathogenicity towards maize and aflatoxin B1 production. This Aspergillus flavus protein is Blue light receptor lreB.